Reading from the N-terminus, the 434-residue chain is Cytochrome b-c1 complex subunit 2, mitochondrial (434 aa).

The transit peptide at 1-31 directs the protein to the mitochondrion; the sequence is MYSLNRLPRSAAFKSSANLLRRNASTTSAGG.

The protein belongs to the peptidase M16 family. UQCRC2/QCR2 subfamily. Component of the ubiquinol-cytochrome c oxidoreductase (cytochrome b-c1 complex, complex III, CIII), a multisubunit enzyme composed of 10 subunits. The complex is composed of 3 respiratory subunits cytochrome b (COB), cytochrome c1 (CYT1) and Rieske protein (RIP1), 2 core protein subunits COR1 and QCR2, and 5 low-molecular weight protein subunits QCR6, QCR7, QCR8, QCR9 and QCR10. The complex exists as an obligatory dimer and forms supercomplexes (SCs) in the inner mitochondrial membrane with a monomer or a dimer of cytochrome c oxidase (complex IV, CIV), resulting in 2 different assemblies (supercomplexes III(2)IV and III(2)IV(2)). Interacts with MRJ1.

The protein localises to the mitochondrion inner membrane. Its function is as follows. Component of the ubiquinol-cytochrome c oxidoreductase, a multisubunit transmembrane complex that is part of the mitochondrial electron transport chain which drives oxidative phosphorylation. The respiratory chain contains 3 multisubunit complexes succinate dehydrogenase (complex II, CII), ubiquinol-cytochrome c oxidoreductase (cytochrome b-c1 complex, complex III, CIII) and cytochrome c oxidase (complex IV, CIV), that cooperate to transfer electrons derived from NADH and succinate to molecular oxygen, creating an electrochemical gradient over the inner membrane that drives transmembrane transport and the ATP synthase. The cytochrome b-c1 complex catalyzes electron transfer from ubiquinol to cytochrome c, linking this redox reaction to translocation of protons across the mitochondrial inner membrane, with protons being carried across the membrane as hydrogens on the quinol. In the process called Q cycle, 2 protons are consumed from the matrix, 4 protons are released into the intermembrane space and 2 electrons are passed to cytochrome c. The polypeptide is Cytochrome b-c1 complex subunit 2, mitochondrial (Cryptococcus neoformans var. grubii serotype A (strain H99 / ATCC 208821 / CBS 10515 / FGSC 9487) (Filobasidiella neoformans var. grubii)).